Here is a 468-residue protein sequence, read N- to C-terminus: Interleukin-6 receptor subunit alpha (468 aa).

Positions 1–19 (MLAVGCALLAALLAAPGAA) are cleaved as a signal peptide. Topologically, residues 20–365 (LAPRRCPAQE…VQDSSSVPLP (346 aa)) are extracellular. Cystine bridges form between Cys-25/Cys-193, Cys-47/Cys-96, Cys-121/Cys-132, and Cys-165/Cys-176. The region spanning 26–112 (PAQEVARGVL…AGTVHLLVDV (87 aa)) is the Ig-like C2-type domain. N-linked (GlcNAc...) asparagine glycans are attached at residues Asn-55 and Asn-93. Fibronectin type-III domains follow at residues 113–217 (PPEE…LQPD) and 218–316 (PPAN…TPWT). 2 N-linked (GlcNAc...) asparagine glycosylation sites follow: Asn-221 and Asn-245. The WSXWS motif signature appears at 303–307 (WSEWS). A disordered region spans residues 303–328 (WSEWSPEAMGTPWTESRSPPAENEVS). Residue Asn-350 is glycosylated (N-linked (GlcNAc...) asparagine). Residue Thr-352 is glycosylated (O-linked (GlcNAc) threonine). A helical membrane pass occupies residues 366–386 (TFLVAGGSLAFGTLLCIAIVL). The Cytoplasmic segment spans residues 387–468 (RFKKTWKLRA…ISNTDYFFPR (82 aa)). Pro residues predominate over residues 421-433 (TPVLVPLISPPVS). The disordered stretch occupies residues 421–468 (TPVLVPLISPPVSPSSLGSDNTSSHNRPDARDPRSPYDISNTDYFFPR). Residues 446-455 (NRPDARDPRS) are compositionally biased toward basic and acidic residues. Residues 458–468 (DISNTDYFFPR) are compositionally biased toward polar residues.

This sequence belongs to the type I cytokine receptor family. Type 3 subfamily. Component of a hexamer of two molecules each of IL6, IL6R and IL6ST; first binds to IL6 to associate with the signaling subunit IL6ST. Interacts (via N-terminal ectodomain) with SORL1; this interaction may affect IL6-binding to IL6R, hence decrease IL6 'classic-signaling'. In terms of assembly, also interacts with SORL1; this interaction leads to soluble IL6R internalization. May form a trimeric complex with the soluble SORL1 ectodomain and circulating IL6 receptor; this interaction might stabilize circulating IL6, hence promote IL6 'trans-signaling,. In terms of processing, a short soluble form is released from the membrane by proteolysis. The sIL6R is formed mostly by limited proteolysis of membrane-bound receptors, a process referred to as ectodomain shedding, but is also directly secreted from the cells after alternative mRNA splicing. mIL6R is cleaved by the proteases ADAM10 and ADAM17. Glycosylated. Glycosylation is dispensable for transport, signaling, and cell-surface turnover. Glycosylation at Asn-55 is a protease-regulatory exosite. Glycosylation is required for ADAM17-mediated proteolysis. In terms of tissue distribution, expressed in peripheral blood mononuclear cells and weakly found in urine and serum. 1%-20% of the total sIL6R in plasma is generated by alternative splicing.

Its subcellular location is the cell membrane. The protein resides in the secreted. Classic and trans-signaling are both inhibited by tocilizumab, a humanized monoclonal antibody that blocks interleukin IL6R signaling. Part of the receptor for interleukin 6. Binds to IL6 with low affinity, but does not transduce a signal. Signal activation necessitate an association with IL6ST. Activation leads to the regulation of the immune response, acute-phase reactions and hematopoiesis. The interaction with membrane-bound IL6R and IL6ST stimulates 'classic signaling', the restricted expression of the IL6R limits classic IL6 signaling to only a few tissues such as the liver and some cells of the immune system. Whereas the binding of IL6 and soluble IL6R to IL6ST stimulates 'trans-signaling'. Alternatively, 'cluster signaling' occurs when membrane-bound IL6:IL6R complexes on transmitter cells activate IL6ST receptors on neighboring receiver cells. In terms of biological role, signaling via the membrane-bound IL6R is mostly regenerative and anti-inflammatory. Drives naive CD4(+) T cells to the Th17 lineage, through 'cluster signaling' by dendritic cells. Its function is as follows. Soluble form of IL6 receptor (sIL6R) that acts as an agonist of IL6 activity. The IL6:sIL6R complex (hyper-IL6) binds to IL6ST/gp130 on cell surfaces and induces signaling also on cells that do not express membrane-bound IL6R in a process called IL6 'trans-signaling'. sIL6R is causative for the pro-inflammatory properties of IL6 and an important player in the development of chronic inflammatory diseases. In complex with IL6, is required for induction of VEGF production. Plays a protective role during liver injury, being required for maintenance of tissue regeneration. 'Trans-signaling' in central nervous system regulates energy and glucose homeostasis. The chain is Interleukin-6 receptor subunit alpha from Homo sapiens (Human).